Reading from the N-terminus, the 473-residue chain is Sulfhydrylase-like protein lolC2 (473 aa).

At Lys-226 the chain carries N6-(pyridoxal phosphate)lysine.

The protein belongs to the trans-sulfuration enzymes family. Requires pyridoxal 5'-phosphate as cofactor.

The protein operates within alkaloid biosynthesis. Sulfhydrylase-like protein; part of the gene cluster that mediates the biosynthesis of loline alkaloids, potent insecticidal agents composed of a pyrrolizidine ring system and an uncommon ether bridge linking carbons 2 and 7. Lolines are structurally differentiated by the various modifications of the L-amino group and include norloline, loline, N-methylloline, N-acetylloline, N-acetylnorloline, and N-formylloline. The first committed step is the condensation of O-acetyl-L-homoserine (derived from L-aspartic acid) and L-proline, probably catalyzed by the gamma-type pyridoxal 5'-phosphate(PLP)-dependent enzyme lolC, to give the diamino diacid, NACPP. Ensuing cyclization, decarboxylation, and acetylation steps yield 1-exo-acetamidopyrrolizidine (AcAP). LolO is required for installation of the ether bridge upon the pathway intermediate, 1-exo-acetamidopyrrolizidine (AcAP). In sequential 2-oxoglutarate- and O(2)-consuming steps, lolO removes hydrogens from C2 and C7 of AcAP to form both carbon-oxygen bonds in N-acetylnorloline (NANL), the precursor to all other lolines. The enzymes lolD, lolE, lolF and lolT have also been proposed to be involved in the ether-bridge installation. Further processing of the exocyclic moiety of NANL by fungal N-acetamidase (LolN), methyltransferase (LolM), and cytochrome P450 (LolP) enzymes, with occasional involvement of a plant acetyltransferase, generates the other known lolines. LolN transforms NANL to norlonine which is monomethylated and dimethylated to respectively lonine and N-methyllonine (NML) by lolM. LolP catalyzes hydroxylation of the methyl group in N-methylloline (NML) and further oxygenation to N-formylloline (NFL). A plant acetyltransferase is responsible for the acetylation of loline to form N-acetylloline (NAL). LolA might interact with aspartate kinase to prevent feedback inhibition of its activity by these end products and thereby promote production of L-homoserine from L-aspartate. This chain is Sulfhydrylase-like protein lolC2, found in Epichloe uncinata (Endophyte fungus).